We begin with the raw amino-acid sequence, 368 residues long: Ribosomal RNA large subunit methyltransferase M (368 aa).

Residues serine 189, cysteine 222 to glycine 225, aspartate 241, aspartate 261, and aspartate 278 contribute to the S-adenosyl-L-methionine site. Residue lysine 307 is the Proton acceptor of the active site.

It belongs to the class I-like SAM-binding methyltransferase superfamily. RNA methyltransferase RlmE family. RlmM subfamily. As to quaternary structure, monomer.

Its subcellular location is the cytoplasm. The catalysed reaction is cytidine(2498) in 23S rRNA + S-adenosyl-L-methionine = 2'-O-methylcytidine(2498) in 23S rRNA + S-adenosyl-L-homocysteine + H(+). Its function is as follows. Catalyzes the 2'-O-methylation at nucleotide C2498 in 23S rRNA. The protein is Ribosomal RNA large subunit methyltransferase M of Yersinia enterocolitica serotype O:8 / biotype 1B (strain NCTC 13174 / 8081).